A 24-amino-acid polypeptide reads, in one-letter code: Humanin (24 aa).

Residues 1–12 (MAPRGFSCLLLL) are sufficient to interact with BID and BIM and to suppress BID and BIM activity. Residues 3 to 19 (PRGFSCLLLLTSEIDLP) form a sufficient for neuroprotective activity region. The segment at 5-12 (GFSCLLLL) is sufficient to interact with MPP8. 2 required for secretion regions span residues 9–11 (LLL) and 19–20 (PV).

In terms of assembly, homodimer. Interacts with amyloid-beta protein 42 (Abeta42); the interaction prevents Abeta42 fibril formation. Interacts with BAX; forms fibers with BAX which results in BAX conformational changes and sequestering of BAX into the fibers, preventing BAX activation. Interacts with both full-length BID and cleaved BID p15; forms fibers with BID which results in BID conformational changes and sequestering of BID into the fibers, preventing BID activation. Interacts with BIM isoform BimEL but not with BIM isoforms BimL or BimS; the interaction prevents BIM-induced apoptosis. Interacts with IGFBP3; competes with importin KPNB1 for binding to IGFBP3, blocking IGFBP3 nuclear import. Interacts with TRIM11. Interacts with MPP8. In terms of tissue distribution, expressed in testis, seminal plasma and sperm (at protein level). Higher seminal plasma levels are associated with normospermia than with oligospermia, asthenospermia or oligoasthenospermia (at protein level). Higher sperm levels are associated with normospermia than with asthenospermia (at protein level). Expressed in retinal epithelial cells (at protein level). Expressed in the heart, skeletal muscle, kidney and liver. Lesser but significant expression is observed in the brain and the gastrointestinal tract. Expressed in the AD brain, where it is found in some of the large intact neurons of the occipital lobes and small and round reactive glial cells in the hippocampus.

The protein localises to the secreted. It localises to the cytoplasm. Its subcellular location is the cell projection. The protein resides in the cilium. It is found in the flagellum. The protein localises to the nucleus. It localises to the mitochondrion. Its function is as follows. Plays a role as a neuroprotective factor. Protects against neuronal cell death induced by multiple different familial Alzheimer disease genes and amyloid-beta proteins in Alzheimer disease. Mediates its neuroprotective effect by interacting with a receptor complex composed of IL6ST/GP130, IL27RA/WSX1 and CNTFR. Also acts as a ligand for G-protein coupled receptors FPR2/FPRL1 and FPR3/FPRL2. Inhibits amyloid-beta protein 40 fibril formation. Also inhibits amyloid-beta protein 42 fibril formation. Suppresses apoptosis by binding to BAX and preventing the translocation of BAX from the cytosol to mitochondria. Also suppresses apoptosis by binding to BID and inhibiting the interaction of BID with BAX and BAK which prevents oligomerization of BAX and BAK and suppresses release of apoptogenic proteins from mitochondria. Forms fibers with BAX and also with BID, inducing BAX and BID conformational changes and sequestering them into the fibers which prevents their activation. Can also suppress apoptosis by interacting with BIM isoform BimEL, inhibiting BimEL-induced activation of BAX, blocking oligomerization of BAX and BAK, and preventing release of apoptogenic proteins from mitochondria. Plays a role in up-regulation of anti-apoptotic protein BIRC6/APOLLON, leading to inhibition of neuronal cell death. Binds to IGFBP3 and specifically blocks IGFBP3-induced cell death. Competes with importin KPNB1 for binding to IGFBP3 which is likely to block IGFBP3 nuclear import. Induces chemotaxis of mononuclear phagocytes via FPR2/FPRL1. Reduces aggregation and fibrillary formation by suppressing the effect of APP on mononuclear phagocytes and acts by competitively inhibiting the access of FPR2 to APP. Protects retinal pigment epithelium (RPE) cells against oxidative stress-induced and endoplasmic reticulum (ER) stress-induced apoptosis. Promotes mitochondrial biogenesis in RPE cells following oxidative stress and promotes STAT3 phosphorylation which leads to inhibition of CASP3 release. Also reduces CASP4 levels in RPE cells, suppresses ER stress-induced mitochondrial superoxide production and plays a role in up-regulation of mitochondrial glutathione. Reduces testicular hormone deprivation-induced apoptosis of germ cells at the nonandrogen-sensitive stages of the seminiferous epithelium cycle. Protects endothelial cells against free fatty acid-induced inflammation by suppressing oxidative stress, reducing expression of TXNIP and inhibiting activation of the NLRP3 inflammasome which inhibits expression of pro-inflammatory cytokines IL1B and IL18. Protects against high glucose-induced endothelial cell dysfunction by mediating activation of ERK5 which leads to increased expression of transcription factor KLF2 and prevents monocyte adhesion to endothelial cells. Inhibits the inflammatory response in astrocytes. Increases the expression of PPARGC1A/PGC1A in pancreatic beta cells which promotes mitochondrial biogenesis. Increases insulin sensitivity. This Homo sapiens (Human) protein is Humanin.